The following is a 237-amino-acid chain: Ribonuclease 3 (237 aa).

One can recognise an RNase III domain in the interval 5 to 136; that stretch reads VDELSARLGV…VIAALFLDQG (132 aa). Residue E49 coordinates Mg(2+). D53 is an active-site residue. Residues D122 and E125 each coordinate Mg(2+). Residue E125 is part of the active site. Residues 163-232 form the DRBM domain; that stretch reads DYKSRLQARI…ARAALDALEG (70 aa). Positions 185 to 208 are enriched in basic and acidic residues; that stretch reads IDRSGPEHRPEFTVEVRAGEERLG. A disordered region spans residues 185–237; it reads IDRSGPEHRPEFTVEVRAGEERLGTGKGPSKQAAEQAAARAALDALEGGTDGR. Residues 216-231 show a composition bias toward low complexity; the sequence is QAAEQAAARAALDALE.

This sequence belongs to the ribonuclease III family. As to quaternary structure, homodimer. Mg(2+) serves as cofactor.

It localises to the cytoplasm. The enzyme catalyses Endonucleolytic cleavage to 5'-phosphomonoester.. Its function is as follows. Digests double-stranded RNA. Involved in the processing of primary rRNA transcript to yield the immediate precursors to the large and small rRNAs (23S and 16S). Processes some mRNAs, and tRNAs when they are encoded in the rRNA operon. Processes pre-crRNA and tracrRNA of type II CRISPR loci if present in the organism. The chain is Ribonuclease 3 from Roseiflexus sp. (strain RS-1).